Here is a 151-residue protein sequence, read N- to C-terminus: Small ribosomal subunit protein uS15 (151 aa).

A disordered region spans residues Met1–Thr20.

Belongs to the universal ribosomal protein uS15 family. In terms of assembly, part of the 30S ribosomal subunit.

The protein is Small ribosomal subunit protein uS15 of Methanococcus maripaludis (strain DSM 14266 / JCM 13030 / NBRC 101832 / S2 / LL).